Consider the following 349-residue polypeptide: Isopentenyl-diphosphate delta-isomerase (349 aa).

Position 6–7 (6–7 (RK)) interacts with substrate. FMN contacts are provided by residues 62 to 64 (AMT), Ser-93, and Asn-122. Residue Gln-152 participates in substrate binding. Glu-153 lines the Mg(2+) pocket. Residues Lys-184, Thr-214, 258–259 (GG), and 280–281 (AG) contribute to the FMN site.

Belongs to the IPP isomerase type 2 family. Homooctamer. Dimer of tetramers. FMN serves as cofactor. The cofactor is NADPH. It depends on Mg(2+) as a cofactor.

The protein localises to the cytoplasm. It catalyses the reaction isopentenyl diphosphate = dimethylallyl diphosphate. Functionally, involved in the biosynthesis of isoprenoids. Catalyzes the 1,3-allylic rearrangement of the homoallylic substrate isopentenyl (IPP) to its allylic isomer, dimethylallyl diphosphate (DMAPP). This Bacillus anthracis (strain A0248) protein is Isopentenyl-diphosphate delta-isomerase.